The sequence spans 1465 residues: MSDLFAKLMDQIEMPLDMRRSSAFSSADIIEVKVHSVSRLWEFHFAFAAVLPIATYRELHDRLIRTFEAADIKVTFDIQAAQVDYSDDLLQAYYQEAFEHAPCNSASFKSSFSKLKVTYEDDKLIIAAPGFVNNDHFRKNHLPNLVKQFEAFGFGTLTIDMVSDQEMTEHLTKDFVSSRQALVEKAVQDNLEAQKSLEAMMPPAEEATPAPKFDYKERVAQRQAGFEKAAITPMIEIETEENRIVFEGMVFDVERKTTRTGRHIINFKMTDYTSSFALQKWAKDDEELRKFDMIAKGAWLRVQGNIETNPFTKSLTMNVQQVKEIVHHDRKDLMPEGQKRVEFHAHTNMSTMDALPTVESLIDTAAKWGHKAVAITDHANVQSFPHGYHRARKAGIKAIFGLEANIVEDKVPISYDPVDMDLHEATYVVFDVETTGLSAMNNDLIQIAASKMFKGNIVEQFDEFIDPGHPLSAFTTELTGITDKHLQDAKPLVTVLKAFQDFCKDSILVAHNASFDVGFMNANYERHDLPKITQPVIDTLEFARNLYPEYKRHGLGPLTKRFQVSLDHHHMANYDAEATGRLLFIFLKDAREKHGIKNLLQLNTDLVAEDSYKKARIKHATIYVQNQVGLKNMFKLVSLSNIKYFEGVPRIPRTVLDAHREGLLLGTACSDGEVFDAVLTKGIDAAVDLAKYYDFIEIMPPAIYQPLVVRELIKDQAGIEQVIRDLIEVGKRANKPVLATGNVHYLEPEEEIYREIIVRSLGQGAMINRTIGRGEGAQPAPLPKAHFRTTNEMLDEFAFLGKDLAYQVVVENTQDFADRIEEVEVVKGDLYTPYIDKAEETVAELTYQKAFEIYGNPLPDIIDLRIEKELTSILGNGFAVIYLASQMLVNRSNERGYLVGSRGSVGSSFVATMIGITEVNPMPPHYVCPSCQHSEFITDGSVGSGYDLPNKPCPKCGTPYQKDGQDIPFETFLGFDGDKVPDIDLNFSGDDQPSAHLDVRDIFGDEYAFRAGTVGTVAEKTAYGFVKGYERDYGKFYRDAEVDRLAAGAAGVKRTTGQHPGGIVVIPNYMDVYDFTPVQYPADDVTASWQTTHFNFHDIDENVLKLDILGHDDPTMIRKLQDLSGIDPITIPADDPGVMALFSGTEVLGVTPEQIGTPTGMLGIPEFGTNFVRGMVNETHPTTFAELLQLSGLSHGTDVWLGNAQDLIKEGIATLKTVIGCRDDIMVYLMHAGLEPKMAFTIMERVRKGLWLKISEEERNGYIDAMRENNVPDWYIESCGKIKYMFPKAHAAAYVLMALRVAYFKVHHPIMYYCAYFSIRAKAFELKTMSGGLDAVKARMEDITIKRKNNEATNVENDLFTTLEIVNEMLERGFKFGKLDLYKSDAIEFQIKGDTLIPPFIALEGLGENVGKQIVKARQEGEFLSKMELRKRGGASSTLVEKMDEMGILGNMPEDNQLSLFDDFF.

Positions 427–583 constitute an Exonuclease domain; the sequence is YVVFDVETTG…YDAEATGRLL (157 aa).

The protein belongs to the DNA polymerase type-C family. PolC subfamily.

It localises to the cytoplasm. It catalyses the reaction DNA(n) + a 2'-deoxyribonucleoside 5'-triphosphate = DNA(n+1) + diphosphate. Its function is as follows. Required for replicative DNA synthesis. This DNA polymerase also exhibits 3' to 5' exonuclease activity. The polypeptide is DNA polymerase III PolC-type (Streptococcus pyogenes serotype M2 (strain MGAS10270)).